A 625-amino-acid polypeptide reads, in one-letter code: Grainyhead-like protein 2 homolog (625 aa).

3 disordered regions span residues 1-24 (MSQESDNNKRLVALVPMPSDPPFN), 82-112 (VSKASDSQEDQEKRNCLGTSEAQSNLSGGEN), and 428-453 (EERKQNRKKGKGQASQTQCNSSSDGK). Residues 1–93 (MSQESDNNKR…KASDSQEDQE (93 aa)) are transcription activation. Polar residues-rich tracts occupy residues 98–109 (LGTSEAQSNLSG) and 440–451 (QASQTQCNSSSD). In terms of domain architecture, Grh/CP2 DB spans 244–482 (SSGTFQYTLE…DLHSQPVLFI (239 aa)).

It belongs to the grh/CP2 family. Grainyhead subfamily. As to quaternary structure, homodimer, also forms heterodimers with GRHL1 or GRHL3. In terms of tissue distribution, expressed in keratinocytes (at protein level). Highly expressed in placenta, prostate, brain and kidney. Lower-level expression in a variety of epithelial tissues such as thymus, lung, salivary gland, mammary gland and digestive tract. Expressed in the cochlear. Expressed in corneal epithelial cells, but not in the endothelium or stroma.

The protein resides in the nucleus. The protein localises to the membrane. Functionally, transcription factor playing an important role in primary neurulation and in epithelial development. Binds directly to the consensus DNA sequence 5'-AACCGGTT-3' acting as an activator and repressor on distinct target genes. During embryogenesis, plays unique and cooperative roles with GRHL3 in establishing distinct zones of primary neurulation. Essential for closure 3 (rostral end of the forebrain), functions cooperatively with GRHL3 in closure 2 (forebrain/midbrain boundary) and posterior neuropore closure. Regulates epithelial morphogenesis acting as a target gene-associated transcriptional activator of apical junctional complex components. Up-regulates of CLDN3 and CLDN4, as well as of RAB25, which increases the CLDN4 protein and its localization at tight junctions. Comprises an essential component of the transcriptional machinery that establishes appropriate expression levels of CLDN4 and CDH1 in different types of epithelia. Exhibits functional redundancy with GRHL3 in epidermal morphogenetic events and epidermal wound repair. In lung, forms a regulatory loop with NKX2-1 that coordinates lung epithelial cell morphogenesis and differentiation. In keratinocytes, plays a role in telomerase activation during cellular proliferation, regulates TERT expression by binding to TERT promoter region and inhibiting DNA methylation at the 5'-CpG island, possibly by interfering with DNMT1 enzyme activity. In addition, impairs keratinocyte differentiation and epidermal function by inhibiting the expression of genes clustered at the epidermal differentiation complex (EDC) as well as GRHL1 and GRHL3 through epigenetic mechanisms. This chain is Grainyhead-like protein 2 homolog (GRHL2), found in Homo sapiens (Human).